Reading from the N-terminus, the 325-residue chain is Heat-inducible transcription repressor HrcA (325 aa).

Belongs to the HrcA family.

Negative regulator of class I heat shock genes (grpE-dnaK-dnaJ and groELS operons). Prevents heat-shock induction of these operons. The sequence is that of Heat-inducible transcription repressor HrcA from Staphylococcus epidermidis (strain ATCC 35984 / DSM 28319 / BCRC 17069 / CCUG 31568 / BM 3577 / RP62A).